We begin with the raw amino-acid sequence, 410 residues long: PHAF1 protein At3g51130 (410 aa).

The protein belongs to the PHAF1 family.

The protein is PHAF1 protein At3g51130 of Arabidopsis thaliana (Mouse-ear cress).